We begin with the raw amino-acid sequence, 425 residues long: Formyl-CoA:oxalate CoA-transferase (425 aa).

Residues 17-18 (QS), Arg-38, 72-75 (LDTK), 96-98 (NFG), Arg-104, and 136-139 (KVYE) each bind CoA. Residue Asp-168 is the Nucleophile of the active site. 247 to 249 (GGQ) contacts substrate.

The protein belongs to the CoA-transferase III family. Frc subfamily. As to quaternary structure, homodimer.

The enzyme catalyses formyl-CoA + oxalate = oxalyl-CoA + formate. The protein operates within metabolic intermediate degradation; oxalate degradation; CO(2) and formate from oxalate: step 1/2. Its function is as follows. Involved in the catabolism of oxalate and in the adapatation to low pH via the induction of the oxalate-dependent acid tolerance response (ATR). Catalyzes the transfer of the CoA moiety from formyl-CoA to oxalate. This is Formyl-CoA:oxalate CoA-transferase from Rhodopseudomonas palustris (strain BisA53).